A 392-amino-acid polypeptide reads, in one-letter code: Methylthioribose kinase (392 aa).

ATP is bound by residues Asn38, Lys53, and 107 to 109 (EDL). Asp225 is a substrate binding site. Residue 242-244 (DPE) participates in ATP binding. Arg332 is a substrate binding site.

The protein belongs to the methylthioribose kinase family. Homodimer.

It carries out the reaction 5-(methylsulfanyl)-D-ribose + ATP = 5-(methylsulfanyl)-alpha-D-ribose 1-phosphate + ADP + H(+). The protein operates within amino-acid biosynthesis; L-methionine biosynthesis via salvage pathway; S-methyl-5-thio-alpha-D-ribose 1-phosphate from S-methyl-5'-thioadenosine (hydrolase route): step 2/2. In terms of biological role, catalyzes the phosphorylation of methylthioribose into methylthioribose-1-phosphate. The sequence is that of Methylthioribose kinase from Bacillus mycoides (strain KBAB4) (Bacillus weihenstephanensis).